The chain runs to 427 residues: Serine--tRNA ligase (427 aa).

231 to 233 (TAE) contributes to the L-serine binding site. ATP is bound at residue 262 to 264 (RSE). Glu-285 lines the L-serine pocket. 349–352 (EISS) provides a ligand contact to ATP. An L-serine-binding site is contributed by Ser-385.

This sequence belongs to the class-II aminoacyl-tRNA synthetase family. Type-1 seryl-tRNA synthetase subfamily. As to quaternary structure, homodimer. The tRNA molecule binds across the dimer.

Its subcellular location is the cytoplasm. The catalysed reaction is tRNA(Ser) + L-serine + ATP = L-seryl-tRNA(Ser) + AMP + diphosphate + H(+). It carries out the reaction tRNA(Sec) + L-serine + ATP = L-seryl-tRNA(Sec) + AMP + diphosphate + H(+). It participates in aminoacyl-tRNA biosynthesis; selenocysteinyl-tRNA(Sec) biosynthesis; L-seryl-tRNA(Sec) from L-serine and tRNA(Sec): step 1/1. Its function is as follows. Catalyzes the attachment of serine to tRNA(Ser). Is also able to aminoacylate tRNA(Sec) with serine, to form the misacylated tRNA L-seryl-tRNA(Sec), which will be further converted into selenocysteinyl-tRNA(Sec). The protein is Serine--tRNA ligase of Brucella abortus (strain S19).